Here is a 319-residue protein sequence, read N- to C-terminus: Pantothenate kinase (319 aa).

Residue 97-104 (GSVAVGKS) coordinates ATP.

The protein belongs to the prokaryotic pantothenate kinase family.

The protein localises to the cytoplasm. The enzyme catalyses (R)-pantothenate + ATP = (R)-4'-phosphopantothenate + ADP + H(+). It participates in cofactor biosynthesis; coenzyme A biosynthesis; CoA from (R)-pantothenate: step 1/5. The protein is Pantothenate kinase of Chelativorans sp. (strain BNC1).